A 270-amino-acid polypeptide reads, in one-letter code: Phospholysine phosphohistidine inorganic pyrophosphate phosphatase (270 aa).

Mg(2+) contacts are provided by Asp17 and Ser19. Residues 17–19 (DIS), 54–55 (TN), and Lys189 each bind substrate. Asp214 contributes to the Mg(2+) binding site.

The protein belongs to the HAD-like hydrolase superfamily. Homodimer. Requires Mg(2+) as cofactor. In terms of tissue distribution, detected in liver (at protein level).

Its subcellular location is the cytoplasm. The protein resides in the nucleus. The enzyme catalyses diphosphate + H2O = 2 phosphate + H(+). Phosphatase that hydrolyzes imidodiphosphate, 3-phosphohistidine and 6-phospholysine. Has broad substrate specificity and can also hydrolyze inorganic diphosphate, but with lower efficiency. The chain is Phospholysine phosphohistidine inorganic pyrophosphate phosphatase (LHPP) from Bos taurus (Bovine).